The following is a 535-amino-acid chain: Peptide chain release factor 3 (535 aa).

Residues 8–276 (ARRRTFAIIS…ALVEQAPPPG (269 aa)) enclose the tr-type G domain. GTP is bound by residues 17-24 (SHPDAGKT), 85-89 (DTPGH), and 139-142 (NKMD).

It belongs to the TRAFAC class translation factor GTPase superfamily. Classic translation factor GTPase family. PrfC subfamily.

The protein resides in the cytoplasm. Its function is as follows. Increases the formation of ribosomal termination complexes and stimulates activities of RF-1 and RF-2. It binds guanine nucleotides and has strong preference for UGA stop codons. It may interact directly with the ribosome. The stimulation of RF-1 and RF-2 is significantly reduced by GTP and GDP, but not by GMP. This chain is Peptide chain release factor 3, found in Bordetella petrii (strain ATCC BAA-461 / DSM 12804 / CCUG 43448).